A 341-amino-acid chain; its full sequence is S-adenosylmethionine:tRNA ribosyltransferase-isomerase (341 aa).

This sequence belongs to the QueA family. Monomer.

It is found in the cytoplasm. The catalysed reaction is 7-aminomethyl-7-carbaguanosine(34) in tRNA + S-adenosyl-L-methionine = epoxyqueuosine(34) in tRNA + adenine + L-methionine + 2 H(+). Its pathway is tRNA modification; tRNA-queuosine biosynthesis. Its function is as follows. Transfers and isomerizes the ribose moiety from AdoMet to the 7-aminomethyl group of 7-deazaguanine (preQ1-tRNA) to give epoxyqueuosine (oQ-tRNA). The sequence is that of S-adenosylmethionine:tRNA ribosyltransferase-isomerase from Caldanaerobacter subterraneus subsp. tengcongensis (strain DSM 15242 / JCM 11007 / NBRC 100824 / MB4) (Thermoanaerobacter tengcongensis).